The primary structure comprises 1438 residues: Pyochelin synthetase PchE (1438 aa).

One can recognise a Carrier 1 domain in the interval Asp6 to Asp85. Ser46 bears the O-(pantetheine 4'-phosphoryl)serine mark. The segment at Arg136–Ala442 is condensation/cyclization. Positions Arg563–Arg950 are adenylation. The 76-residue stretch at Glu1350–Thr1425 folds into the Carrier 2 domain. At Ser1385 the chain carries O-(pantetheine 4'-phosphoryl)serine.

This sequence belongs to the NRP synthetase family. The cofactor is pantetheine 4'-phosphate.

The enzyme catalyses holo-[peptidyl-carrier protein] + L-cysteine + ATP = L-cysteinyl-[peptidyl-carrier protein] + AMP + diphosphate. It participates in siderophore biosynthesis. The protein operates within antifungal biosynthesis. In terms of biological role, involved in the biosynthesis of the siderophore pyochelin. Accepts salicylate activated by PchD at the first peptidyl carrier domain (ArCP), and activates and fixes one molecule of cysteine at the second peptidyl carrier domain (PCP1) via a thioester linkage to the phosphopanthetheine moiety. Then catalyzes the condensation reaction between the salicylate bound to the first site and the cysteine bound to the second site, and the cyclization of the cysteine to form the salicyl-thiazolinyl-S-PCP1 intermediate at the second site. When this intermediate is released by the action of a thioesterase, it produces the antifungal antibiotic dihydroaeruginoic acid (Dha or hydroxyphenyl-thiazolinyl-carboxylate). This chain is Pyochelin synthetase PchE, found in Pseudomonas aeruginosa (strain ATCC 15692 / DSM 22644 / CIP 104116 / JCM 14847 / LMG 12228 / 1C / PRS 101 / PAO1).